The sequence spans 405 residues: Cysteine desulfurase IscS (405 aa).

Residues 75-76, Asn-156, Gln-184, and 204-206 each bind pyridoxal 5'-phosphate; these read AT and SAH. Lys-207 carries the post-translational modification N6-(pyridoxal phosphate)lysine. Position 244 (Thr-244) interacts with pyridoxal 5'-phosphate. Cys-329 (cysteine persulfide intermediate) is an active-site residue. Cys-329 provides a ligand contact to [2Fe-2S] cluster.

This sequence belongs to the class-V pyridoxal-phosphate-dependent aminotransferase family. NifS/IscS subfamily. As to quaternary structure, homodimer. Forms a heterotetramer with IscU, interacts with other sulfur acceptors. Pyridoxal 5'-phosphate is required as a cofactor.

It localises to the cytoplasm. It carries out the reaction (sulfur carrier)-H + L-cysteine = (sulfur carrier)-SH + L-alanine. It participates in cofactor biosynthesis; iron-sulfur cluster biosynthesis. Its function is as follows. Master enzyme that delivers sulfur to a number of partners involved in Fe-S cluster assembly, tRNA modification or cofactor biosynthesis. Catalyzes the removal of elemental sulfur atoms from cysteine to produce alanine. Functions as a sulfur delivery protein for Fe-S cluster synthesis onto IscU, an Fe-S scaffold assembly protein, as well as other S acceptor proteins. In Acinetobacter baumannii (strain SDF), this protein is Cysteine desulfurase IscS.